Consider the following 134-residue polypeptide: Large ribosomal subunit protein uL16c (134 aa).

It belongs to the universal ribosomal protein uL16 family. As to quaternary structure, part of the 50S ribosomal subunit.

The protein localises to the plastid. It localises to the chloroplast. This is Large ribosomal subunit protein uL16c from Pinus thunbergii (Japanese black pine).